The sequence spans 420 residues: O-methyltransferase penK (420 aa).

D285 is a binding site for S-adenosyl-L-methionine. The Proton acceptor role is filled by H325.

Belongs to the class I-like SAM-binding methyltransferase superfamily. Cation-independent O-methyltransferase family.

The protein operates within secondary metabolite biosynthesis. Its pathway is alkaloid biosynthesis. It participates in mycotoxin biosynthesis. O-methyltransferase; part of the gene cluster that mediates the biosynthesis of penigequinolones, potent insecticidal alkaloids that contain a highly modified 10-carbon prenyl group. The first stage is catalyzed by the nonribosomal peptide synthetase penN that condenses anthranilic acid and O-methyl-L-tyrosine to produce 4'-methoxycyclopeptin. 4'-methoxycyclopeptin is then converted to 4'-methoxydehydrocyclopeptin by the ketoglutarate-dependent dioxygenase penM through dehydrogenation to form a double bond between C-alpha and C-beta of the O-methyltyrosine side chain. PenM also converts its first product methoxydehydrocyclopeptin to 4'-methoxycyclopenin. The following conversion of 4'methoxycyclopenin into 4'-methoxyviridicatin is catalyzed by the cyclopenase penL. 4'-methoxyviridicatin is the precursor of quinolone natural products, and is further converted to quinolinone B. The prenyltransferase penI then catalyzes the canonical Friedel-Crafts alkylation of quinolinone B with dimethylallyl cation to yield dimethylallyl quinolone, which is subjected to FAD-dependent dehydrogenation by the FAD-linked oxidoreductase penH to yield conjugated aryl diene. The delta(3') double bond then serves as the site of the second alkylation with DMAPP catalyzed by the prenyltransferase penG to yield a carbenium ion intermediate, which can be attacked by H(2)O to yield a styrenyl quinolone containing a C3'-hydroxyprenyl chain, or undergo cyclization to yield yaequinolones J1 and J2. The conversion of the styrenyl quinolone into the tetrahydrofuran-containing yaequinolone C is performed by the FAD-dependent monooxygenase penE and involves epoxidation of the terminal C7'-C8' olefin, followed by epoxide ring opening initiated by the C3' hydroxyl group. The predicted cysteine hydrolase penJ acts as an epoxide hydrolase that enhances the rate of the 5-exo-tet cyclization step, increasing the yield of yaequinolone C. PenF catalyzes the cationic rearrangement of the epoxide formed by penE (before ring opening to produce yaequinolone C) into yaequinolone D. Finally, the short-chain dehydrogenase/reductase (SDR)-like reductase penD, catalyzes both the dehydration of yaequinolone D and the reduction of the resulting oxonium to yield penigequinolone. In Penicillium thymicola, this protein is O-methyltransferase penK.